The sequence spans 1493 residues: MAELSEPEGPVDWKERCVALESQLMKFRVQASKIRELLAEKMQQLERQVIDAERQAEKAFQQVQVMEDKLKAANIQTSESETRLYNKCQDLESLIQEKDDVIQNLELQLEEQKQIRIQEAKIIEEKAAKIKEWVTVKLNELELENQNLRLINQNQTEEIRTMQSKLQEVQGKKSSTVSTLKLSEGQRLSSLTFGCFLSRARSPPQVVKSEEMSKISSKEPEFTEGKDMEEMEIPEKSVDNQVLENNRGQRTLHQTPCGSEQNRKTRTSFATDGGISQNSGAPVSDWSSDEEDGSKGRSKSRCTSTLSSHTSEEGVQCSRMGSEMYLTASDDSSSIFEEETFGIKRPEHKKLYSWQQEAQWKALNSPLGKGNSELSKKEQDSSSDELNKKFQSQRLDYSSSSSEANTPSPILTPALMPKHPNSLSGKGTQLVPSSHLPPPKLRIPNVFSISVALAKRHLSQPQLSSDRMFGTNRNAISMIRPLRPQETDLDLVDGDSTEVLENMDTSCDDGLFSYDSLDSPNSDDQEHCDSAKKVAYSKPPTPPLHRFPSWESRIYAVAKSGIRMSEAFNMESVNKNSAATLSYTTSGLYTSLIYKNMTTPVYTTLKGKATQISSSPFLDDSSGSEEEDSSRSSSRTSESDSRSRSGPGSPRAMKRGVSLSSVASESDYAIPPDAYSTDTEYSQPEQKLPKTCSSSSDNGKNEPLEKSGYLLKMSGKVKSWKRRWFVLKGGELLYYKSPSDVIRKPQGHIELSASCSILRGDNKQTVQLTTEKHTYYLTADSPNILEEWIKVLQNVLRVQAANPLSLQPEGKPTMKGLLTKVKHGYSKRVWCTLIGKTLYYFRSQEDKFPLGQIKLWEAKVEEVDRSCDSDEDYEASGRSLLSTHYTIVIHPKDQGPTYLLIGSKHEKDTWLYHLTVAAGSNNVNVGSEFEQLVCKLLNIDGEPSSQIWRHPTLCHSKEGIISPLTTLPSEALQTEAIKLFKTCQLFINAAVDSPAIDYHISLAQSALQICLTHPELQNEICCQLIKQTRRRQPQNQPGPLQGWQLLALCVGLFLPHHPFLWLLRLHLKRNADSRTEFGKYAIYCQRCVERTQQNGDREARPSRMEILSTLLRNPYHHSLPFSIPVHFMNGIYQVVGFDASTTVEEFLNTLNQDTGMRKPAQSGFALFTDDPSGRDLEHCLQGNIKICDIISKWEQASKEQQPGKCEGTRTVRLTYKNRLYFSVQARGETDREKLLLMYQTNDQIINGLFPLNKDLALEMAALLSQVEIGDFERPFSTPAGHVTNQCKVNQTLKQVIEKFYPKRYRDGCSEEQLRQLCQRLSTRWMALRGHSAADCVRIYLTVARKWPFFGAKLFLAKPITPSSLGSTFLWLAVHEDGLSLLEYNSMRLIVSYVYKSLMTFGGYQDDFMVVINNTHSKDKPTEKLLFAMAKPKILEITLLIASYINNFHQQKAAFHHLSAPALLSAQTRGPQARMMGSQPLLSSSRPTKGPTLL.

Positions 20 to 175 (LESQLMKFRV…LQEVQGKKSS (156 aa)) form a coiled coil. Disordered regions lie at residues 202–230 (SPPQVVKSEEMSKISSKEPEFTEGKDMEE), 245–335 (NNRG…SSSI), 363–439 (LNSP…LPPP), and 613–705 (SSSP…EPLE). A compositionally biased stretch (basic and acidic residues) spans 208–230 (KSEEMSKISSKEPEFTEGKDMEE). Polar residues-rich tracts occupy residues 245-260 (NNRGQRTLHQTPCGSE) and 267-281 (TSFATDGGISQNSGA). The span at 374 to 388 (LSKKEQDSSSDELNK) shows a compositional bias: basic and acidic residues. Polar residues-rich tracts occupy residues 389–409 (KFQSQRLDYSSSSSEANTPSP), 421–432 (NSLSGKGTQLVP), and 676–698 (STDTEYSQPEQKLPKTCSSSSDN). PH domains lie at 703 to 797 (PLEK…NVLR) and 811 to 919 (KPTM…VAAG). In terms of domain architecture, MyTH4 spans 955 to 1110 (HSKEGIISPL…PSRMEILSTL (156 aa)). Positions 1121-1451 (FSIPVHFMNG…SYINNFHQQK (331 aa)) constitute an FERM domain. The disordered stretch occupies residues 1474–1493 (MMGSQPLLSSSRPTKGPTLL).

As to quaternary structure, self-associates. Interacts with TGFB1I1. In terms of tissue distribution, kidney. Reduced expression in patients with focal segmental glomerulosclerosis.

The protein resides in the cytoplasm. The protein localises to the cytoskeleton. It localises to the cell membrane. It is found in the cell projection. Its subcellular location is the lamellipodium. Its function is as follows. In the kidney glomerulus may play a role in linking podocyte foot processes to the glomerular basement membrane. May be involved in stabilization of F-actin by attenuating its depolymerization. Can recruit TGFB1I1 from focal adhesions to podocyte lamellipodia. The chain is Pleckstrin homology domain-containing family H member 2 (PLEKHH2) from Homo sapiens (Human).